Here is a 240-residue protein sequence, read N- to C-terminus: MADIRITGRMVNFSRITFDTNDHDVIRQQLSNILNEGSYQGTVVIIDSTVEQELIALIQLLVSMGLQPMAVIDGILGDEARAIQFPVLPADQPLQRIKPTAEQVAIVEKPTSAQASVETKKPLNNNAVAHITSYHDEILRTGQSLVQDQGDIILKAGMNSGSEVIASGNIHIYGTVRGRVIAGAGGHAAARIFCQSLEAELVSIAGTYCVADDIPKHVVKKPVHIYLNEKQELEFEALEL.

It belongs to the MinC family. Interacts with MinD and FtsZ.

Functionally, cell division inhibitor that blocks the formation of polar Z ring septums. Rapidly oscillates between the poles of the cell to destabilize FtsZ filaments that have formed before they mature into polar Z rings. Prevents FtsZ polymerization. The polypeptide is Probable septum site-determining protein MinC (Acinetobacter baumannii (strain ATCC 17978 / DSM 105126 / CIP 53.77 / LMG 1025 / NCDC KC755 / 5377)).